Consider the following 84-residue polypeptide: Sec-independent protein translocase protein TatA (84 aa).

The chain crosses the membrane as a helical span at residues 1–21; it reads MGGISIWQLLIIAVIVILLFG. The tract at residues 40–84 is disordered; sequence KKAMSDEDKPADKKDADFEPKNIEQQKTEASAETTAETKKDKEQA. Composition is skewed to basic and acidic residues over residues 42–66 and 75–84; these read AMSD…EQQK and AETKKDKEQA.

This sequence belongs to the TatA/E family. In terms of assembly, the Tat system comprises two distinct complexes: a TatABC complex, containing multiple copies of TatA, TatB and TatC subunits, and a separate TatA complex, containing only TatA subunits. Substrates initially bind to the TatABC complex, which probably triggers association of the separate TatA complex to form the active translocon.

The protein resides in the cell inner membrane. Part of the twin-arginine translocation (Tat) system that transports large folded proteins containing a characteristic twin-arginine motif in their signal peptide across membranes. TatA could form the protein-conducting channel of the Tat system. The protein is Sec-independent protein translocase protein TatA of Vibrio atlanticus (strain LGP32) (Vibrio splendidus (strain Mel32)).